A 1175-amino-acid chain; its full sequence is Chromosome partition protein Smc (1175 aa).

Proline 32 to asparagine 39 provides a ligand contact to ATP. A coiled-coil region spans residues valine 170–lysine 504. The SMC hinge domain occupies leucine 524–leucine 625. Coiled-coil stretches lie at residues aspartate 684–lysine 918 and serine 944–serine 1022. A disordered region spans residues arginine 807 to aspartate 849. Basic and acidic residues predominate over residues arginine 817–arginine 828. Residues threonine 829–arginine 838 are compositionally biased toward polar residues. Residues leucine 840–aspartate 849 show a composition bias toward basic and acidic residues.

It belongs to the SMC family. As to quaternary structure, homodimer.

The protein localises to the cytoplasm. Functionally, required for chromosome condensation and partitioning. This Delftia acidovorans (strain DSM 14801 / SPH-1) protein is Chromosome partition protein Smc.